A 694-amino-acid polypeptide reads, in one-letter code: Pentatricopeptide repeat-containing protein At3g12770 (694 aa).

PPR repeat units lie at residues 52-82 (SGFL…LPRP), 83-117 (QIFP…RVSP), 118-152 (DSFT…GFDA), 153-183 (DVFV…LPLP), 186-220 (TIVS…DVKP), 221-255 (DWVA…GLEI), 256-286 (EPDL…MKSP), 287-321 (NLIL…DVRP), 322-356 (DTIS…DYRD), 357-387 (DVFI…TLDR), 388-422 (DVVV…GVHP), 423-457 (NDVT…KINP), and 458-488 (QQQH…MPVQ). Positions 493 to 568 (VWGALLSACK…DVGCSWVEVR (76 aa)) are type E motif. Residues 569–599 (GRLEAFRVGDKSHPRYEEIERQVEWIESRLK) form a type E(+) motif region. The segment at 600–694 (EGGFVANKDA…DGVCSCGDYW (95 aa)) is type DYW motif.

This sequence belongs to the PPR family. PCMP-H subfamily.

The sequence is that of Pentatricopeptide repeat-containing protein At3g12770 (PCMP-H43) from Arabidopsis thaliana (Mouse-ear cress).